Reading from the N-terminus, the 66-residue chain is Large ribosomal subunit protein uL29 (66 aa).

Belongs to the universal ribosomal protein uL29 family.

This chain is Large ribosomal subunit protein uL29, found in Rhizobium etli (strain ATCC 51251 / DSM 11541 / JCM 21823 / NBRC 15573 / CFN 42).